A 352-amino-acid polypeptide reads, in one-letter code: Transcription factor RSL2 (352 aa).

The span at 160–169 (SVTTTKSLTG) shows a compositional bias: polar residues. The segment at 160–277 (SVTTTKSLTG…ASRGAATDPQ (118 aa)) is disordered. Positions 183 to 192 (KRARVNKRAQ) are enriched in basic residues. Residues 223–232 (SRQNSSTTFC) are compositionally biased toward polar residues. A basic motif region spans residues 272 to 285 (AATDPQSLYARKRR). Residues 272 to 321 (AATDPQSLYARKRRERINERLRILQNLVPNGTKVDISTMLEEAVHYVKFL) form the bHLH domain. The helix-loop-helix motif stretch occupies residues 286–321 (ERINERLRILQNLVPNGTKVDISTMLEEAVHYVKFL).

As to quaternary structure, homodimer. As to expression, expressed in roots. Expressed in root epidermal hair cells.

Its subcellular location is the nucleus. Its function is as follows. Transcription factor involved in the regulation of root hair elongation. Does not seem to be a direct transcriptional target of RHD6 and RSL1. Involved in the regulation of root hair elongation in response to low phosphate. In Arabidopsis thaliana (Mouse-ear cress), this protein is Transcription factor RSL2.